A 475-amino-acid polypeptide reads, in one-letter code: FAD-dependent monooxygenase spyC (475 aa).

The signal sequence occupies residues 1 to 24; the sequence is MTAKPPFKVIIVGGSIAGLTLAHC. Glutamate 36, glycine 50, arginine 109, aspartate 310, and alanine 323 together coordinate FAD. The helical transmembrane segment at 444–464 threads the bilayer; sequence LLIPFLYPVVAFSLCVLAWIG.

Belongs to the paxM FAD-dependent monooxygenase family. Requires FAD as cofactor.

It is found in the membrane. It carries out the reaction (2E,6E,10E)-geranylgeranyl-triacetate lactone + AH2 + O2 = (S)-(2E,6E,10E)-epoxygeranylgeranyl-triacetate lactone + A + H2O. It functions in the pathway secondary metabolite biosynthesis; terpenoid biosynthesis. Functionally, FAD-dependent monooxygenase spyC; part of the gene cluster that mediates the biosynthesis of meroterpenoids called sartorypyrones. Within the pathway, spyC catalyzes the epoxidation of geranylgeranyl-triacetate lactone at the terminal olein to yield epoxygeranylgeranyl-triacetate lactone. The biosynthesis of sartorypyrones begins with the production of triacetic acid lactone (TAL) by the NR-PKS spyA using one molecule of acetyl-CoA and two molecules of malonyl-CoA. The prenyltransferase spyF then conjugates geranylgeranyl pyrophosphate (GGPP) to TAL to form geranylgeranyl-triacetate lactone, for which the pathway-specific geranylgeranyl pyrophosphate synthase (GGPS) spyE is required to provide GGPP. Subsequently, geranylgeranyl-triacetate lactone is epoxidized at the terminal olein by the FAD-dependent monooxygenase spyC, followed by cyclization of the terpenoid component catalyzed by the terpene cyclase spyD to produce both the bicyclic sartorypyrone F and the monocyclic sartorypyrone D. Finally, the last step of the biosynthesis involves the acetylation of the meroterpenoids sartorypyrones D and F by the acetyltransferase SpyB to produce sartorypyrones A and G, respectively. The sequence is that of FAD-dependent monooxygenase spyC from Aspergillus fumigatus (strain ATCC MYA-4609 / CBS 101355 / FGSC A1100 / Af293) (Neosartorya fumigata).